Here is a 212-residue protein sequence, read N- to C-terminus: Adenylate kinase (212 aa).

10–15 serves as a coordination point for ATP; sequence GAGKGT. The segment at 30–59 is NMP; that stretch reads STGDMFRAAMANQTEMGRLAKSYIDKGELV. Residues Thr31, Arg36, 57 to 59, 86 to 89, and Gln93 contribute to the AMP site; these read ELV and GYPR. Residues 127–159 form an LID region; sequence GRIINRKTGETFHKVFNPPVDYKEEDYYQREDD. Residues Arg128 and 137-138 contribute to the ATP site; that span reads TF. Arg156 and Arg167 together coordinate AMP. Residue Gln195 participates in ATP binding.

It belongs to the adenylate kinase family. As to quaternary structure, monomer.

It localises to the cytoplasm. It catalyses the reaction AMP + ATP = 2 ADP. Its pathway is purine metabolism; AMP biosynthesis via salvage pathway; AMP from ADP: step 1/1. Catalyzes the reversible transfer of the terminal phosphate group between ATP and AMP. Plays an important role in cellular energy homeostasis and in adenine nucleotide metabolism. This is Adenylate kinase from Streptococcus agalactiae serotype III (strain NEM316).